Consider the following 56-residue polypeptide: Large ribosomal subunit protein bL32 (56 aa).

The segment covering 1–16 (MAVQKSKKSRSMRGMR) has biased composition (basic residues). A disordered region spans residues 1 to 22 (MAVQKSKKSRSMRGMRRSHDAL).

The protein belongs to the bacterial ribosomal protein bL32 family.

This is Large ribosomal subunit protein bL32 from Aliivibrio salmonicida (strain LFI1238) (Vibrio salmonicida (strain LFI1238)).